A 619-amino-acid polypeptide reads, in one-letter code: Teichoic acid poly(ribitol-phosphate) polymerase (619 aa).

This sequence belongs to the CDP-glycerol glycerophosphotransferase family.

The protein resides in the cell membrane. It catalyses the reaction 4-O-[1-D-ribitylphospho-(2R)-1-glycerylphospho]-N-acetyl-beta-D-mannosaminyl-(1-&gt;4)-N-acetyl-alpha-D-glucosaminyl di-trans,octa-cis-undecaprenyl diphosphate + n CDP-L-ribitol = 4-O-[(D-ribitylphospho)(n)-D-ribitylphospho-(2R)-glycerylphospho]-N-acetyl-beta-D-mannosaminyl-(1-&gt;4)-N-acetyl-alpha-D-glucosaminyl di-trans,octa-cis-undecaprenyl diphosphate + n CMP + n H(+). It participates in cell wall biogenesis; poly(ribitol phosphate) teichoic acid biosynthesis. In terms of biological role, responsible for the polymerization of the main chain of the major teichoic acid by sequential transfer of ribitol phosphate units from CDP-ribitol to the glycerol phosphate attached to the disaccharide linkage unit. Synthesizes polymers of up to 40 ribitol phosphate units in length. This chain is Teichoic acid poly(ribitol-phosphate) polymerase (tarL), found in Bacillus spizizenii (strain ATCC 23059 / NRRL B-14472 / W23) (Bacillus subtilis subsp. spizizenii).